We begin with the raw amino-acid sequence, 98 residues long: Molybdopterin synthase sulfur carrier subunit (98 aa).

Glycine 98 is modified (1-thioglycine; alternate). Glycine 98 bears the Glycyl adenylate; alternate mark.

This sequence belongs to the MoaD family. MOCS2A subfamily. As to quaternary structure, heterotetramer; composed of 2 small (MOCS2A) and 2 large (MOCS2B) subunits. C-terminal thiocarboxylation occurs in 2 steps, it is first acyl-adenylated (-COAMP) via the hesA/moeB/thiF part of MOCS3, then thiocarboxylated (-COSH) via the rhodanese domain of MOCS3.

The protein localises to the cytoplasm. It participates in cofactor biosynthesis; molybdopterin biosynthesis. Acts as a sulfur carrier required for molybdopterin biosynthesis. Component of the molybdopterin synthase complex that catalyzes the conversion of precursor Z into molybdopterin by mediating the incorporation of 2 sulfur atoms into precursor Z to generate a dithiolene group. In the complex, serves as sulfur donor by being thiocarboxylated (-COSH) at its C-terminus by MOCS3. After interaction with MOCS2B, the sulfur is then transferred to precursor Z to form molybdopterin. The sequence is that of Molybdopterin synthase sulfur carrier subunit from Aedes aegypti (Yellowfever mosquito).